The following is a 152-amino-acid chain: MIYSKVENFINENKQNAIFTEGASHENIGRIEENLQCDLPNSYKWFLEKYGAGGLFGVLVLGYNFDHASVVNRTNEYKEHYGLTDGLVVIEDVDYFAYCLDTNKMKDGECPVVEWDRVIGYQDTVADSFIEFFYNKIQEAKDDWDEDEDWDD.

In terms of assembly, interacts with cognate toxin YobL but not with non-cognate putative toxin YeeF. The interaction inhibits the toxic activity of YobL.

The protein localises to the cytoplasm. Immunity component of one of 6 LXG toxin-immunity modules in this strain. They promote kin selection, mediate competition in biofilms, and drive spatial segregation of different strains, indicating that LXG toxins may help avoid warfare between strains in biofilms. Mediates intercellular competition during biofilm formation; disruption of the operon disadvantages the bacteria, but overexpression of the cognate immunity protein restores growth in competition with wild-type. In situ neutralizes the toxic effect of cognate toxin YobL. Neutralizes the toxic activity of cognate toxin YobL upon expression in E.coli. Does not have immunity protein activity on other LXG toxins. This Bacillus subtilis (strain 168) protein is Immunity protein YobK (yobK).